Here is a 103-residue protein sequence, read N- to C-terminus: Histone H4 (103 aa).

Residues 1-14 are compositionally biased toward gly residues; the sequence is MSGRGKGGKGLGKG. The segment at 1–20 is disordered; sequence MSGRGKGGKGLGKGGAKRHR. N6-acetyl-N6-methyllysine; alternate is present on Lys6. N6-methyllysine; alternate occurs at positions 6, 9, and 13. Residue Lys13 is modified to N6-acetyl-N6-methyllysine; alternate. Residues 17–21 mediate DNA binding; sequence KRHRK. The residue at position 92 (Lys92) is an N6-glutaryllysine.

Belongs to the histone H4 family. In terms of assembly, the nucleosome is a histone octamer containing two molecules each of H2A, H2B, H3 and H4 assembled in one H3-H4 heterotetramer and two H2A-H2B heterodimers. The octamer wraps approximately 147 bp of DNA. Post-translationally, glutarylation at Lys-92 (H4K91glu) destabilizes nucleosomes by promoting dissociation of the H2A-H2B dimers from nucleosomes.

Its subcellular location is the nucleus. It is found in the chromosome. In terms of biological role, core component of nucleosome. Nucleosomes wrap and compact DNA into chromatin, limiting DNA accessibility to the cellular machineries which require DNA as a template. Histones thereby play a central role in transcription regulation, DNA repair, DNA replication and chromosomal stability. DNA accessibility is regulated via a complex set of post-translational modifications of histones, also called histone code, and nucleosome remodeling. The chain is Histone H4 (H4.1) from Phanerodontia chrysosporium (White-rot fungus).